Here is a 180-residue protein sequence, read N- to C-terminus: Probable chorismate pyruvate-lyase (180 aa).

Residues Arg82, Leu120, and Glu165 each coordinate substrate.

This sequence belongs to the UbiC family.

Its subcellular location is the cytoplasm. The enzyme catalyses chorismate = 4-hydroxybenzoate + pyruvate. It functions in the pathway cofactor biosynthesis; ubiquinone biosynthesis. In terms of biological role, removes the pyruvyl group from chorismate, with concomitant aromatization of the ring, to provide 4-hydroxybenzoate (4HB) for the ubiquinone pathway. In Photobacterium profundum (strain SS9), this protein is Probable chorismate pyruvate-lyase.